Consider the following 357-residue polypeptide: Anthranilate phosphoribosyltransferase (357 aa).

5-phospho-alpha-D-ribose 1-diphosphate is bound by residues G94, 97–98 (GD), T102, 104–107 (NLST), 122–130 (KHGNRAASS), and G134. Position 94 (G94) interacts with anthranilate. S106 is a binding site for Mg(2+). Residue N125 coordinates anthranilate. R180 is a binding site for anthranilate. Mg(2+) contacts are provided by D238 and E239.

This sequence belongs to the anthranilate phosphoribosyltransferase family. Homodimer. It depends on Mg(2+) as a cofactor.

It catalyses the reaction N-(5-phospho-beta-D-ribosyl)anthranilate + diphosphate = 5-phospho-alpha-D-ribose 1-diphosphate + anthranilate. The protein operates within amino-acid biosynthesis; L-tryptophan biosynthesis; L-tryptophan from chorismate: step 2/5. In terms of biological role, catalyzes the transfer of the phosphoribosyl group of 5-phosphorylribose-1-pyrophosphate (PRPP) to anthranilate to yield N-(5'-phosphoribosyl)-anthranilate (PRA). The polypeptide is Anthranilate phosphoribosyltransferase (Mycobacterium sp. (strain KMS)).